A 441-amino-acid polypeptide reads, in one-letter code: Protein kinase C and casein kinase substrate in neurons protein 1 (441 aa).

Residues Ser-2 and Ser-76 each carry the phosphoserine modification. The 271-residue stretch at 10–280 folds into the F-BAR domain; that stretch reads EEITDSFWEV…AIRGADAQED (271 aa). Positions 23 to 272 form a coiled coil; it reads KRTVKRIDDG…HVYRELEQAI (250 aa). Thr-181 carries the post-translational modification Phosphothreonine. Positions 297–380 are disordered; the sequence is PQFEEWNPDL…ANGGANPFED (84 aa). Positions 311–321 are enriched in basic and acidic residues; sequence AKKEKQPKKAE. The span at 324 to 355 shows a compositional bias: polar residues; it reads TLSNATGAVESTSQAGDRGSVSSYDRGQTYAT. 5 positions are modified to phosphoserine: Ser-343, Ser-345, Ser-346, Ser-358, and Ser-362. The SH3 domain occupies 382–441; sequence AKGVRVRALYDYDGQEQDELSFKAGDELTKLGEEDEQGWCRGRLDSGQLGLYPANYVEAI. Tyr-391 bears the Phosphotyrosine mark. 2 positions are modified to phosphoserine: Ser-402 and Ser-427.

This sequence belongs to the PACSIN family. As to quaternary structure, homodimer. May form heterooligomers with other PACSINs. Interacts with both COBL and DBNL. Identified in a complex composed of COBL, PACSIN1 and WASL. Interacts with EHD3. Interacts (via SH3 domain) with SYNJ1 and WASL. Interacts (via SH3 domain) with DNM1; the interaction is reduced by DNM1 phosphorylation. Interacts with DNM2 and DNM3. Interacts with MAPT. Interacts with EHD1. Interacts with TRPV4. Phosphorylated by casein kinase 2 (CK2) and protein kinase C (PKC). Highly expressed in brain. Detected in hippocampus and dorsal root ganglion neurons. Detected in rod photoreceptor terminals in the outer plexiform layer of the retina (at protein level). In CNS neurons, high levels in the pyramidal cells of the hippocampus, Purkinje cells of the cerebellum and large neurons of the cortex and brain stem.

It is found in the cytoplasm. Its subcellular location is the cell projection. The protein localises to the synapse. It localises to the synaptosome. The protein resides in the ruffle membrane. It is found in the membrane. Its subcellular location is the cytoplasmic vesicle membrane. The protein localises to the cytosol. It localises to the cell membrane. Its function is as follows. Binds to membranes via its F-BAR domain and mediates membrane tubulation. Plays a role in the reorganization of the microtubule cytoskeleton via its interaction with MAPT; this decreases microtubule stability and inhibits MAPT-induced microtubule polymerization. Plays a role in cellular transport processes by recruiting DNM1, DNM2 and DNM3 to membranes. Plays a role in the reorganization of the actin cytoskeleton and in neuron morphogenesis via its interaction with COBL and WASL, and by recruiting COBL to the cell cortex. Plays a role in the regulation of neurite formation, neurite branching and the regulation of neurite length. Required for normal synaptic vesicle endocytosis; this process retrieves previously released neurotransmitters to accommodate multiple cycles of neurotransmission. Required for normal excitatory and inhibitory synaptic transmission. The protein is Protein kinase C and casein kinase substrate in neurons protein 1 (Pacsin1) of Mus musculus (Mouse).